The primary structure comprises 96 residues: MAIRPLQDRVIVKRLEEERKTASGIVIPDTAAEKPDQGEVIAVGPGKKDDNGKSIPLDVKVGDKVLFGKYAGQAVKVNGEEVLVLREDDILGIVEA.

This sequence belongs to the GroES chaperonin family. As to quaternary structure, heptamer of 7 subunits arranged in a ring. Interacts with the chaperonin GroEL.

The protein resides in the cytoplasm. Together with the chaperonin GroEL, plays an essential role in assisting protein folding. The GroEL-GroES system forms a nano-cage that allows encapsulation of the non-native substrate proteins and provides a physical environment optimized to promote and accelerate protein folding. GroES binds to the apical surface of the GroEL ring, thereby capping the opening of the GroEL channel. The sequence is that of Co-chaperonin GroES from Methylobacillus flagellatus (strain ATCC 51484 / DSM 6875 / VKM B-1610 / KT).